The primary structure comprises 338 residues: Ferrochelatase (338 aa).

Residues His-202 and Glu-283 each coordinate Fe cation.

Belongs to the ferrochelatase family.

It is found in the cytoplasm. The catalysed reaction is heme b + 2 H(+) = protoporphyrin IX + Fe(2+). It participates in porphyrin-containing compound metabolism; protoheme biosynthesis; protoheme from protoporphyrin-IX: step 1/1. Catalyzes the ferrous insertion into protoporphyrin IX. This chain is Ferrochelatase, found in Acinetobacter baumannii (strain AB307-0294).